The primary structure comprises 157 residues: Protein BeeE (157 aa).

Belongs to the phage portal family.

The protein is Protein BeeE (beeE) of Escherichia coli (strain K12).